The chain runs to 272 residues: Indole-3-glycerol phosphate synthase (272 aa).

Belongs to the TrpC family.

It catalyses the reaction 1-(2-carboxyphenylamino)-1-deoxy-D-ribulose 5-phosphate + H(+) = (1S,2R)-1-C-(indol-3-yl)glycerol 3-phosphate + CO2 + H2O. It functions in the pathway amino-acid biosynthesis; L-tryptophan biosynthesis; L-tryptophan from chorismate: step 4/5. In Mycolicibacterium gilvum (strain PYR-GCK) (Mycobacterium gilvum (strain PYR-GCK)), this protein is Indole-3-glycerol phosphate synthase.